The chain runs to 219 residues: Probable nicotinate-nucleotide adenylyltransferase (219 aa).

The protein belongs to the NadD family.

It carries out the reaction nicotinate beta-D-ribonucleotide + ATP + H(+) = deamido-NAD(+) + diphosphate. Its pathway is cofactor biosynthesis; NAD(+) biosynthesis; deamido-NAD(+) from nicotinate D-ribonucleotide: step 1/1. Catalyzes the reversible adenylation of nicotinate mononucleotide (NaMN) to nicotinic acid adenine dinucleotide (NaAD). The sequence is that of Probable nicotinate-nucleotide adenylyltransferase from Hahella chejuensis (strain KCTC 2396).